A 498-amino-acid chain; its full sequence is ATP synthase subunit beta, chloroplastic (498 aa).

ATP is bound at residue 172–179 (GGAGVGKT).

This sequence belongs to the ATPase alpha/beta chains family. As to quaternary structure, F-type ATPases have 2 components, CF(1) - the catalytic core - and CF(0) - the membrane proton channel. CF(1) has five subunits: alpha(3), beta(3), gamma(1), delta(1), epsilon(1). CF(0) has four main subunits: a(1), b(1), b'(1) and c(9-12).

Its subcellular location is the plastid. It localises to the chloroplast thylakoid membrane. The enzyme catalyses ATP + H2O + 4 H(+)(in) = ADP + phosphate + 5 H(+)(out). Functionally, produces ATP from ADP in the presence of a proton gradient across the membrane. The catalytic sites are hosted primarily by the beta subunits. The sequence is that of ATP synthase subunit beta, chloroplastic from Calycanthus floridus (Eastern sweetshrub).